The primary structure comprises 247 residues: Large ribosomal subunit protein uL30 (247 aa).

N-acetylmethionine is present on Met-1. Repeat copies occupy residues 7-17 (KKKVPAVPETL), 18-29 (KKKRRNFAELKI), 30-41 (KRLRKKFAQKML), and 42-53 (RKARRKLIYEKA). A 4 X 12 AA tandem repeats region spans residues 7 to 53 (KKKVPAVPETLKKKRRNFAELKIKRLRKKFAQKMLRKARRKLIYEKA). Thr-16 carries the phosphothreonine modification. Lys-123 is subject to N6-acetyllysine. At Lys-126 the chain carries N6-succinyllysine. Residue Tyr-138 is modified to Phosphotyrosine.

Belongs to the universal ribosomal protein uL30 family. Component of the large ribosomal subunit. Homodimer. Interacts with DHX33.

It is found in the cytoplasm. Component of the large ribosomal subunit. The ribosome is a large ribonucleoprotein complex responsible for the synthesis of proteins in the cell. Binds to G-rich structures in 28S rRNA and in mRNAs. Plays a regulatory role in the translation apparatus; inhibits cell-free translation of mRNAs. The chain is Large ribosomal subunit protein uL30 (RPL7) from Pongo abelii (Sumatran orangutan).